A 171-amino-acid polypeptide reads, in one-letter code: Co-chaperone protein HscB homolog (171 aa).

Residues asparagine 2–glutamate 74 enclose the J domain.

Belongs to the HscB family. Interacts with HscA and stimulates its ATPase activity.

Its function is as follows. Co-chaperone involved in the maturation of iron-sulfur cluster-containing proteins. Seems to help targeting proteins to be folded toward HscA. The sequence is that of Co-chaperone protein HscB homolog from Aliivibrio salmonicida (strain LFI1238) (Vibrio salmonicida (strain LFI1238)).